The following is a 171-amino-acid chain: Adenine phosphoribosyltransferase (171 aa).

The protein belongs to the purine/pyrimidine phosphoribosyltransferase family. In terms of assembly, homodimer.

It localises to the cytoplasm. The enzyme catalyses AMP + diphosphate = 5-phospho-alpha-D-ribose 1-diphosphate + adenine. It functions in the pathway purine metabolism; AMP biosynthesis via salvage pathway; AMP from adenine: step 1/1. Catalyzes a salvage reaction resulting in the formation of AMP, that is energically less costly than de novo synthesis. The chain is Adenine phosphoribosyltransferase from Rhodospirillum rubrum (strain ATCC 11170 / ATH 1.1.1 / DSM 467 / LMG 4362 / NCIMB 8255 / S1).